The following is a 140-amino-acid chain: Hemoglobin subunit beta (140 aa).

The 140-residue stretch at 1 to 140 folds into the Globin domain; sequence GGSDVSAFLA…VGEALAKGYH (140 aa). Positions 57 and 86 each coordinate heme b.

Belongs to the globin family. In terms of assembly, heterotetramer of either two alpha-B chains or two alpha-C chains and two beta chains.

Functionally, the beta chain is a component of adult hemoglobins B. And C. This is Hemoglobin subunit beta (HBB) from Aquarana catesbeiana (American bullfrog).